The following is a 119-amino-acid chain: Large ribosomal subunit protein uL22 (119 aa).

Belongs to the universal ribosomal protein uL22 family. Part of the 50S ribosomal subunit.

This protein binds specifically to 23S rRNA; its binding is stimulated by other ribosomal proteins, e.g. L4, L17, and L20. It is important during the early stages of 50S assembly. It makes multiple contacts with different domains of the 23S rRNA in the assembled 50S subunit and ribosome. Functionally, the globular domain of the protein is located near the polypeptide exit tunnel on the outside of the subunit, while an extended beta-hairpin is found that lines the wall of the exit tunnel in the center of the 70S ribosome. The protein is Large ribosomal subunit protein uL22 of Tropheryma whipplei (strain TW08/27) (Whipple's bacillus).